The sequence spans 297 residues: F-actin-capping protein subunit beta (297 aa).

The span at 276–289 (DLSGKESDDKRQSE) shows a compositional bias: basic and acidic residues. The interval 276 to 297 (DLSGKESDDKRQSELVKGLQSL) is disordered.

This sequence belongs to the F-actin-capping protein beta subunit family. Component of the F-actin capping complex, composed of a heterodimer of an alpha and a beta subunit.

The protein localises to the cytoplasm. Its subcellular location is the cytoskeleton. The protein resides in the actin patch. F-actin-capping proteins bind in a Ca(2+)-independent manner to the fast growing ends of actin filaments (barbed end) thereby blocking the exchange of subunits at these ends. Unlike other capping proteins (such as gelsolin and severin), these proteins do not sever actin filaments. This chain is F-actin-capping protein subunit beta (CAP2), found in Debaryomyces hansenii (strain ATCC 36239 / CBS 767 / BCRC 21394 / JCM 1990 / NBRC 0083 / IGC 2968) (Yeast).